The sequence spans 1073 residues: DNA-directed RNA polymerase subunit beta (1073 aa).

It belongs to the RNA polymerase beta chain family. In plastids the minimal PEP RNA polymerase catalytic core is composed of four subunits: alpha, beta, beta', and beta''. When a (nuclear-encoded) sigma factor is associated with the core the holoenzyme is formed, which can initiate transcription.

The protein resides in the plastid. It localises to the chloroplast. It catalyses the reaction RNA(n) + a ribonucleoside 5'-triphosphate = RNA(n+1) + diphosphate. Functionally, DNA-dependent RNA polymerase catalyzes the transcription of DNA into RNA using the four ribonucleoside triphosphates as substrates. The protein is DNA-directed RNA polymerase subunit beta of Aethionema grandiflorum (Persian stone-cress).